The following is a 208-amino-acid chain: uncharacterized protein (208 aa).

The interval 126 to 151 (VGSGSGSDSSSGSTSSPNTVNNYNSD) is disordered. Residues 131 to 141 (GSDSSSGSTSS) show a composition bias toward low complexity.

This is an uncharacterized protein from Dictyostelium discoideum (Social amoeba).